Here is a 216-residue protein sequence, read N- to C-terminus: Glycerol uptake facilitator protein-like 6 (216 aa).

2 consecutive transmembrane segments (helical) span residues 5–25 (LAEF…VVIA) and 30–50 (LAIG…FGGI). Residues 56-58 (NPA) carry the NPA 1 motif. A run of 3 helical transmembrane segments spans residues 72–92 (ADAI…SAAV), 114–134 (IGSG…LMVI), and 147–167 (FAGL…LNLT). The short motif at 172-174 (NPA) is the NPA 2 element. Residues 191 to 213 (LWVYILAPEVGAILAAFCARVMG) traverse the membrane as a helical segment.

This sequence belongs to the MIP/aquaporin (TC 1.A.8) family.

It localises to the cell membrane. Probable transporter that facilitates the transmembrane diffusion of an unknown substrate. Is not permeable to water, dihydroxyacetone, glycerol, urea, H(2)O(2) and D/L-lactic acid. The sequence is that of Glycerol uptake facilitator protein-like 6 from Lactiplantibacillus plantarum (strain ATCC BAA-793 / NCIMB 8826 / WCFS1) (Lactobacillus plantarum).